Consider the following 605-residue polypeptide: Elongation factor 4 (605 aa).

One can recognise a tr-type G domain in the interval 9 to 192 (SRIRNFCIIA…AIIARVPAPA (184 aa)). GTP contacts are provided by residues 21 to 26 (DHGKST) and 139 to 142 (NKID).

The protein belongs to the TRAFAC class translation factor GTPase superfamily. Classic translation factor GTPase family. LepA subfamily.

The protein resides in the cell inner membrane. The enzyme catalyses GTP + H2O = GDP + phosphate + H(+). In terms of biological role, required for accurate and efficient protein synthesis under certain stress conditions. May act as a fidelity factor of the translation reaction, by catalyzing a one-codon backward translocation of tRNAs on improperly translocated ribosomes. Back-translocation proceeds from a post-translocation (POST) complex to a pre-translocation (PRE) complex, thus giving elongation factor G a second chance to translocate the tRNAs correctly. Binds to ribosomes in a GTP-dependent manner. The protein is Elongation factor 4 of Chlorobium luteolum (strain DSM 273 / BCRC 81028 / 2530) (Pelodictyon luteolum).